Consider the following 175-residue polypeptide: Putative metal-dependent hydrolase BPUM_0784 (175 aa).

The Zn(2+) site is built by His65, His157, and His161.

The protein belongs to the metal hydrolase YfiT family. Homodimer. The cofactor is Zn(2+).

Its subcellular location is the cytoplasm. Functionally, possible metal-dependent hydrolase. The polypeptide is Putative metal-dependent hydrolase BPUM_0784 (Bacillus pumilus (strain SAFR-032)).